Reading from the N-terminus, the 66-residue chain is Large ribosomal subunit protein uL29c (66 aa).

The protein belongs to the universal ribosomal protein uL29 family.

Its subcellular location is the plastid. It is found in the chloroplast. In Gracilaria tenuistipitata var. liui (Red alga), this protein is Large ribosomal subunit protein uL29c.